The sequence spans 155 residues: SsrA-binding protein (155 aa).

Belongs to the SmpB family.

The protein resides in the cytoplasm. Required for rescue of stalled ribosomes mediated by trans-translation. Binds to transfer-messenger RNA (tmRNA), required for stable association of tmRNA with ribosomes. tmRNA and SmpB together mimic tRNA shape, replacing the anticodon stem-loop with SmpB. tmRNA is encoded by the ssrA gene; the 2 termini fold to resemble tRNA(Ala) and it encodes a 'tag peptide', a short internal open reading frame. During trans-translation Ala-aminoacylated tmRNA acts like a tRNA, entering the A-site of stalled ribosomes, displacing the stalled mRNA. The ribosome then switches to translate the ORF on the tmRNA; the nascent peptide is terminated with the 'tag peptide' encoded by the tmRNA and targeted for degradation. The ribosome is freed to recommence translation, which seems to be the essential function of trans-translation. This is SsrA-binding protein from Lactococcus lactis subsp. lactis (strain IL1403) (Streptococcus lactis).